We begin with the raw amino-acid sequence, 301 residues long: ATP synthase gamma chain (301 aa).

It belongs to the ATPase gamma chain family. F-type ATPases have 2 components, CF(1) - the catalytic core - and CF(0) - the membrane proton channel. CF(1) has five subunits: alpha(3), beta(3), gamma(1), delta(1), epsilon(1). CF(0) has three main subunits: a, b and c.

The protein resides in the cell inner membrane. Produces ATP from ADP in the presence of a proton gradient across the membrane. The gamma chain is believed to be important in regulating ATPase activity and the flow of protons through the CF(0) complex. The polypeptide is ATP synthase gamma chain (Helicobacter pylori (strain G27)).